The sequence spans 150 residues: Macrodomain Ter protein (150 aa).

This sequence belongs to the MatP family. In terms of assembly, homodimer.

It localises to the cytoplasm. Its function is as follows. Required for spatial organization of the terminus region of the chromosome (Ter macrodomain) during the cell cycle. Prevents early segregation of duplicated Ter macrodomains during cell division. Binds specifically to matS, which is a 13 bp signature motif repeated within the Ter macrodomain. This Erwinia tasmaniensis (strain DSM 17950 / CFBP 7177 / CIP 109463 / NCPPB 4357 / Et1/99) protein is Macrodomain Ter protein.